A 68-amino-acid chain; its full sequence is Riparin-1.6 (68 aa).

The N-terminal stretch at 1–15 (MKIIVFLAVLMLVSA) is a signal peptide. Residues 16–41 (QVCLVSAAEMEHSSDNELSSRDLVKR) constitute a propeptide that is removed on maturation. C47 and C53 are oxidised to a cystine. A Cysteine amide modification is found at C53. Residues 57–68 (DIESSEGANGGE) constitute a propeptide that is removed on maturation.

Expressed by the skin glands.

The protein localises to the secreted. This chain is Riparin-1.6, found in Crinia riparia (Streambank froglet).